Here is a 725-residue protein sequence, read N- to C-terminus: Putative oligopeptide transporter YGL114W (725 aa).

9 consecutive transmembrane segments (helical) span residues 28–48 (ATIA…QFGL), 134–154 (FREL…FAVP), 254–274 (IIIL…SYFV), 353–373 (WILW…FIVV), 449–469 (ISGC…LFGI), 472–492 (IPLY…ILGI), 564–584 (FCAQ…MYLC), 644–664 (YGYG…GIFN), and 697–717 (IVFS…NMLF).

Belongs to the oligopeptide OPT transporter family.

The protein localises to the membrane. This Saccharomyces cerevisiae (strain ATCC 204508 / S288c) (Baker's yeast) protein is Putative oligopeptide transporter YGL114W.